Consider the following 388-residue polypeptide: Succinate--CoA ligase [ADP-forming] subunit beta (388 aa).

One can recognise an ATP-grasp domain in the interval 9–244; the sequence is KQLFKEFGLP…PSQDDAREAE (236 aa). ATP-binding positions include Lys-46, 53–55, Glu-99, Thr-102, and Glu-107; that span reads GRG. Mg(2+) contacts are provided by Asn-199 and Asp-213. Substrate contacts are provided by residues Asn-264 and 321 to 323; that span reads GIV.

It belongs to the succinate/malate CoA ligase beta subunit family. As to quaternary structure, heterotetramer of two alpha and two beta subunits. Requires Mg(2+) as cofactor.

It carries out the reaction succinate + ATP + CoA = succinyl-CoA + ADP + phosphate. The catalysed reaction is GTP + succinate + CoA = succinyl-CoA + GDP + phosphate. It participates in carbohydrate metabolism; tricarboxylic acid cycle; succinate from succinyl-CoA (ligase route): step 1/1. Its function is as follows. Succinyl-CoA synthetase functions in the citric acid cycle (TCA), coupling the hydrolysis of succinyl-CoA to the synthesis of either ATP or GTP and thus represents the only step of substrate-level phosphorylation in the TCA. The beta subunit provides nucleotide specificity of the enzyme and binds the substrate succinate, while the binding sites for coenzyme A and phosphate are found in the alpha subunit. The chain is Succinate--CoA ligase [ADP-forming] subunit beta from Idiomarina loihiensis (strain ATCC BAA-735 / DSM 15497 / L2-TR).